The primary structure comprises 338 residues: Glyceraldehyde-3-phosphate dehydrogenase (338 aa).

NAD(+)-binding positions include 12–13 (RI), D34, and R80. Residues 151-153 (SCT), T182, 211-212 (TG), and R234 each bind D-glyceraldehyde 3-phosphate. C152 serves as the catalytic Nucleophile. An NAD(+)-binding site is contributed by N316.

This sequence belongs to the glyceraldehyde-3-phosphate dehydrogenase family. In terms of assembly, homotetramer.

The protein localises to the cytoplasm. The catalysed reaction is D-glyceraldehyde 3-phosphate + phosphate + NAD(+) = (2R)-3-phospho-glyceroyl phosphate + NADH + H(+). It functions in the pathway carbohydrate degradation; glycolysis; pyruvate from D-glyceraldehyde 3-phosphate: step 1/5. This is Glyceraldehyde-3-phosphate dehydrogenase (GPD) from Paracoccidioides lutzii (strain ATCC MYA-826 / Pb01) (Paracoccidioides brasiliensis).